We begin with the raw amino-acid sequence, 524 residues long: MGIVINLFLIIAASIVFFVVGFYIGRFFLERIGTTKVLEAEERAVQVIQEAQKEANDYKELKVNEVNQEWKKRKREFDSEVTIKNNKFAQLQKQIRQKEVTLANQMRDIKETEKKLQEQREELKHQTQNVQNRSAELEKTILEQNQRLESISNLTAEEARQMLIDNMIAKAREEAAETVHQIHEEATQKADRIAEKIMLTAIQRISFEQATESALSVVHIQSDELKGRIIGREGRNIKAFENATGVDIIVDDTPEVVILSCFDPLRREMAKLTLQKLLVDGIIHPVAIEKAYQDAKKEIEDVIMSSGEEAISSLQIPDMPAEIVNLIGKMRFHTVYGQNLLQHSREVAMLAGLMAAELKLDAKQAKRAGLLHDIGLVLPETEMPHALAGMEFLKKFNMSPVVLNAIGAHHGEVEKASPIADLVDAANIVSLSRPGARGAVTAEGNVKRLESLEEIARTFPGVIKTYALQAGREIRVIVEGDNVSDSQADVLAHDIASKIESEAQYPGQIKVTILREKRSVAFAK.

The helical transmembrane segment at 2-22 (GIVINLFLIIAASIVFFVVGF) threads the bilayer. The KH domain maps to 214 to 299 (ALSVVHIQSD…KAYQDAKKEI (86 aa)). Residues 340-432 (LLQHSREVAM…VDAANIVSLS (93 aa)) enclose the HD domain.

Belongs to the RNase Y family.

The protein resides in the cell membrane. Its function is as follows. Endoribonuclease that initiates mRNA decay. This is Ribonuclease Y from Chlorobaculum tepidum (strain ATCC 49652 / DSM 12025 / NBRC 103806 / TLS) (Chlorobium tepidum).